The chain runs to 156 residues: Small ribosomal subunit protein uS7 (156 aa).

Belongs to the universal ribosomal protein uS7 family. In terms of assembly, part of the 30S ribosomal subunit. Contacts proteins S9 and S11.

In terms of biological role, one of the primary rRNA binding proteins, it binds directly to 16S rRNA where it nucleates assembly of the head domain of the 30S subunit. Is located at the subunit interface close to the decoding center, probably blocks exit of the E-site tRNA. The polypeptide is Small ribosomal subunit protein uS7 (Onion yellows phytoplasma (strain OY-M)).